The chain runs to 117 residues: Large ribosomal subunit protein uL24 (117 aa).

Belongs to the universal ribosomal protein uL24 family. As to quaternary structure, part of the 50S ribosomal subunit.

One of two assembly initiator proteins, it binds directly to the 5'-end of the 23S rRNA, where it nucleates assembly of the 50S subunit. In terms of biological role, one of the proteins that surrounds the polypeptide exit tunnel on the outside of the subunit. This chain is Large ribosomal subunit protein uL24, found in Nostoc punctiforme (strain ATCC 29133 / PCC 73102).